Consider the following 378-residue polypeptide: MVTDHSTPVTGRPRVAILFGGRSSEHAVSCVTAAGVMGAIDKNKYEVIPIGIAKSGQWVLASGDTSEWSLSSAALPEVAPSGRTVTLAEVGGEHQLIVTEPNAVPQELGSVDVVFPLLHGPWGEDGTIQGLLELSDTRYVGAGVLASAVGMDKHFMKVVFESAGLSVGPYVAVTDREWSTDAEAVRKRVDKLGFPVFVKPARAGSSMGISKVDSMEGLDAAIDEARRHDLKLVIEAGIVGREIECAVLQGRGTDAPRTSMPGEIAVAVGEHQFYDFAAKYVEDGAAALSCPADMPDEAIARVRELAAVAFDAVGAEGLSRVDFFYTPAGELIINEINTMPGFTPKSMYPQMWAASGLAYGDLIDELIHLALTRKTGLR.

The ATP-grasp domain maps to 157 to 368; the sequence is KVVFESAGLS…YGDLIDELIH (212 aa). ATP is bound at residue 189–244; sequence VDKLGFPVFVKPARAGSSMGISKVDSMEGLDAAIDEARRHDLKLVIEAGIVGREIE. 3 residues coordinate Mg(2+): Asp-322, Glu-335, and Asn-337.

This sequence belongs to the D-alanine--D-alanine ligase family. It depends on Mg(2+) as a cofactor. Mn(2+) is required as a cofactor.

The protein resides in the cytoplasm. It catalyses the reaction 2 D-alanine + ATP = D-alanyl-D-alanine + ADP + phosphate + H(+). The protein operates within cell wall biogenesis; peptidoglycan biosynthesis. Functionally, cell wall formation. In Paenarthrobacter aurescens (strain TC1), this protein is D-alanine--D-alanine ligase.